Here is a 274-residue protein sequence, read N- to C-terminus: 5'-nucleotidase SurE (274 aa).

A divalent metal cation-binding residues include Asp12, Asp13, Ser45, and Asn103.

This sequence belongs to the SurE nucleotidase family. It depends on a divalent metal cation as a cofactor.

It is found in the cytoplasm. It carries out the reaction a ribonucleoside 5'-phosphate + H2O = a ribonucleoside + phosphate. Nucleotidase that shows phosphatase activity on nucleoside 5'-monophosphates. This chain is 5'-nucleotidase SurE, found in Chlamydia felis (strain Fe/C-56) (Chlamydophila felis).